The primary structure comprises 724 residues: Probable ATP-dependent RNA helicase DDX4 (724 aa).

Positions 1 to 11 are enriched in acidic residues; it reads MSGQEDWESEI. 2 disordered regions span residues 1–25 and 37–241; these read MSGQEDWESEIDNPPACVPNLSNSE and SSNN…QGPR. Over residues 108–130 the composition is skewed to basic and acidic residues; that stretch reads SNGKQESGDFTNDDNRTIDDNRR. Positions 168–182 are enriched in polar residues; the sequence is EQSGFTSNDGFNNET. Positions 286 to 314 match the Q motif motif; sequence LTFEEANLCDSLAKNVCKSGYVKLTPIQK. The 184-residue stretch at 317–500 folds into the Helicase ATP-binding domain; sequence IPIIVAGRDL…REILKPDYLF (184 aa). 330-337 serves as a coordination point for ATP; sequence AQTGSGKT. Positions 444–447 match the DEAD box motif; sequence DEAD. The Helicase C-terminal domain maps to 512–675; that stretch reads DVEQMVIEVD…EVPAWLEEVA (164 aa). The segment covering 683–692 has biased composition (polar residues); it reads AYNPRSNKFA. Residues 683-724 are disordered; sequence AYNPRSNKFASTDDRKRGDSRGDYSTSGFSPSAAQAEEEDWG. Residues 693 to 704 are compositionally biased toward basic and acidic residues; it reads STDDRKRGDSRG. Over residues 705-715 the composition is skewed to polar residues; that stretch reads DYSTSGFSPSA.

Belongs to the DEAD box helicase family. DDX4/VASA subfamily.

It is found in the cytoplasm. The catalysed reaction is ATP + H2O = ADP + phosphate + H(+). Its function is as follows. Probable ATP-dependent RNA helicase required during spermatogenesis to repress transposable elements and preventing their mobilization, which is essential for the germline integrity. Acts via the piRNA metabolic process, which mediates the repression of transposable elements during meiosis by forming complexes composed of piRNAs and Piwi proteins and governs the methylation and subsequent repression of transposons. Involved in the secondary piRNAs metabolic process, the production of piRNAs in fetal male germ cells through a ping-pong amplification cycle. This Pelophylax lessonae (Pool frog) protein is Probable ATP-dependent RNA helicase DDX4.